Reading from the N-terminus, the 717-residue chain is MNEFSLFASCPKGLEYVLADELKTLGAEVLRTNPAGVEAKVDLAGAYRICLGSRLANRVLRLLQSTRTATRDGLYQAASEVNWSEHLRPGESYWIAAFGSSGDIRHSRFGAQVVKDAINDHFRDRDLELPVIDKRSGVQTVQLNLAKTITLGLDLAGRSLHQRGYRQEGAAAPLKENLAAAILYRAGWPEICGEDGCFVDPMCGSGTLVVEAAMIAMNIAPGLLNPHFLFEKAPWHDPEVWRGVYEEAMEKAVLGKRRWRGAIFGCDLNPAAIRTAKRNLSRAGLDRWVKLETASAMDFTPDTEGCGQRLLVCNPPYGERLGQELELRSLYRALGRRLKTAYGEWKAGIFTSSVNLAKEIGLRADKQYHLYNGPLATTLYLFDVYGNRPEAETPRKPQNASLEGISEQAQMFRNRLSKNLAKWSKWAKKQQLSAYRIYDADMPEYAVAIDWYDGGIIVQEYAPPKSVDEEKARQRLLDVLEVTPAVLGIDGGQLFLKQRKKQKGMLQYEKTDSSRKERTVEEHGCRFWVNLSDYLDSGLFLDHRPTRYWIQKHSSGKRFLNLFCYTGAASVHAAAGGAATTTSVDMSQTYLSWAERNFHLNKLSGPHRFVRANVLDWLKAEHNSYDLIFLDPPTFSNSKKMEDVLDIQRDHAGLIEDCMRLLAPGGVLIFSCNYRRFKLDSGIEQRFAVENHTAASIPEDFKRNERIHQCWHIRHSA.

The THUMP domain maps to Gly-45–Gln-142.

It belongs to the methyltransferase superfamily. RlmKL family.

The protein localises to the cytoplasm. The catalysed reaction is guanosine(2445) in 23S rRNA + S-adenosyl-L-methionine = N(2)-methylguanosine(2445) in 23S rRNA + S-adenosyl-L-homocysteine + H(+). It catalyses the reaction guanosine(2069) in 23S rRNA + S-adenosyl-L-methionine = N(2)-methylguanosine(2069) in 23S rRNA + S-adenosyl-L-homocysteine + H(+). Functionally, specifically methylates the guanine in position 2445 (m2G2445) and the guanine in position 2069 (m7G2069) of 23S rRNA. The protein is Ribosomal RNA large subunit methyltransferase K/L of Hahella chejuensis (strain KCTC 2396).